A 297-amino-acid chain; its full sequence is MTNLKAVIPVAGLGMHMLPATKAIPKEMLPIVDKPMIQYIVDEIVAAGIKEILLVTHASKNAVENHFDTSYELESLLEQRVKRQLLAEVQSICPPGVTIMNVRQGEPLGLGHSILCARPAIGDNPFVVVLPDVVIDDASADPLRYNLAAMIARFNETGRSQVLAKRMPGDLSEYSVIQTKEPLDREGKVSRIVEFIEKPDQPQTLDSDIMAVGRYVLSADIWPELERTQPGAWGRIQLTDAIAELAKKQSVDAMLMTGDSYDCGKKMGYMQAFVKYGLRNLKEGAKFRKGIEKLLSE.

The protein belongs to the UDPGP type 2 family.

The enzyme catalyses alpha-D-glucose 1-phosphate + UTP + H(+) = UDP-alpha-D-glucose + diphosphate. The protein operates within carbohydrate metabolism; nucleotide-sugar metabolism. It functions in the pathway bacterial outer membrane biogenesis; lipopolysaccharide biosynthesis. The chain is UTP--glucose-1-phosphate uridylyltransferase (galF) from Escherichia coli O157:H7.